A 297-amino-acid polypeptide reads, in one-letter code: Leucine-rich repeat-containing protein 25 (297 aa).

The first 25 residues, 1–25, serve as a signal peptide directing secretion; sequence MGSIRTRLLWLCLLMLLALLHKSGS. At 26–169 the chain is on the extracellular side; it reads QDLTCMVHPS…SCPPSWGPGT (144 aa). Residues Asn44 and Asn49 are each glycosylated (N-linked (GlcNAc...) asparagine). 2 LRR repeats span residues 66-89 and 90-113; these read HAQVLDLSKNGLQVLPGAFFDKLE and KLQTLIVTHNQLDSVDRSLALRCD. N-linked (GlcNAc...) asparagine glycosylation is found at Asn133 and Asn152. Residues 170–190 form a helical membrane-spanning segment; that stretch reads IGALVAGTISLAVAVSGSVLA. The Cytoplasmic portion of the chain corresponds to 191–297; it reads WRLLRRRRRA…VYCNLESLGR (107 aa). The disordered stretch occupies residues 202–244; that stretch reads EHSLSKAQMSPHDIPKPVTDFLPRYSSRRPGPKAPDSPPSRFT. Ser211, Ser238, and Ser267 each carry phosphoserine. Tyr289 bears the Phosphotyrosine mark.

Interacts with RIGI. Interacts with SQSTM1. Interacts with p65/RELA; this interaction promotes the degradation of RELA through autophagy.

It is found in the membrane. The protein resides in the cytoplasm. Plays a role in the inhibition of RLR-mediated type I interferon signaling pathway by targeting RIGI for autophagic degradation. Interacts specifically with ISG15-associated RIGI to promote interaction between RIGI and the autophagic cargo receptor p62/SQSTM1 to mediate RIGI degradation via selective autophagy. Plays also a role in the inhibition of NF-kappa-B signaling pathway and inflammatory response by promoting the degradation of p65/RELA. The chain is Leucine-rich repeat-containing protein 25 (Lrrc25) from Mus musculus (Mouse).